The sequence spans 153 residues: Large ribosomal subunit protein uL23m (153 aa).

Residues 110 to 153 (IFPEKDKKSKEGSVEEMHEKFMEDERQRQKPDPRRGGVTEWFGL) are disordered. The segment covering 111–146 (FPEKDKKSKEGSVEEMHEKFMEDERQRQKPDPRRGG) has biased composition (basic and acidic residues).

This sequence belongs to the universal ribosomal protein uL23 family. As to quaternary structure, component of the mitochondrial ribosome large subunit (39S) which comprises a 16S rRNA and about 50 distinct proteins.

Its subcellular location is the mitochondrion. This chain is Large ribosomal subunit protein uL23m (mrpl23), found in Danio rerio (Zebrafish).